A 107-amino-acid chain; its full sequence is UPF0473 protein Ldb1604 (107 aa).

Belongs to the UPF0473 family.

The protein is UPF0473 protein Ldb1604 of Lactobacillus delbrueckii subsp. bulgaricus (strain ATCC 11842 / DSM 20081 / BCRC 10696 / JCM 1002 / NBRC 13953 / NCIMB 11778 / NCTC 12712 / WDCM 00102 / Lb 14).